Consider the following 94-residue polypeptide: Co-chaperonin GroES (94 aa).

The protein belongs to the GroES chaperonin family. As to quaternary structure, heptamer of 7 subunits arranged in a ring. Interacts with the chaperonin GroEL.

The protein resides in the cytoplasm. Functionally, together with the chaperonin GroEL, plays an essential role in assisting protein folding. The GroEL-GroES system forms a nano-cage that allows encapsulation of the non-native substrate proteins and provides a physical environment optimized to promote and accelerate protein folding. GroES binds to the apical surface of the GroEL ring, thereby capping the opening of the GroEL channel. The sequence is that of Co-chaperonin GroES from Brevibacillus choshinensis.